The chain runs to 531 residues: Transmembrane protein 266 (531 aa).

The Cytoplasmic segment spans residues 1-102 (MALAASFNMT…VFLLSASLNS (102 aa)). The chain crosses the membrane as a helical span at residues 103–123 (FLVACVILVVILLTLELLIDI). At 124-129 (KLLQFS) the chain is on the extracellular side. The chain crosses the membrane as a helical span at residues 130-150 (SAFQFAGVIHWISLVILSVFF). The Cytoplasmic segment spans residues 151–169 (SETVLRIVVLGIWDYIENK). A helical membrane pass occupies residues 170–190 (IEVFDGAVIILSLAPMVASTV). The Extracellular segment spans residues 191 to 199 (ANGPRSPWD). A helical transmembrane segment spans residues 200–220 (AISLIIMLRIWRVKRVIDAYV). The Cytoplasmic segment spans residues 221-531 (LPVKLEMEMV…EQKLHRVPEA (311 aa)). Residues 231–251 (IQQYEKAKVIQDEQLERLTQI) are a coiled coil. The disordered stretch occupies residues 380-477 (NGTGATSESA…PAGSAQTSPE (98 aa)). The span at 383 to 412 (GATSESASRSSVTRAQSDSSQTLGSSTDCS) shows a compositional bias: polar residues. Residues 421 to 431 (EPGPSPLPLPP) show a composition bias toward pro residues.

Homodimer; disulfide-linked.

The protein localises to the cell membrane. Its subcellular location is the cell projection. It is found in the dendrite. The protein resides in the perikaryon. Its function is as follows. Voltage-sensor protein present on the post-synaptic side of glutamatergic mossy fibers and granule cells in the cerebellum. Despite the presence of a voltage-sensor segment, does not form a functional ion channel and its precise role remains unclear. Undergoes both rapid and slow structural rearrangements in response to changes in voltage. Contains a zinc-binding site that can regulate the slow conformational transition. The protein is Transmembrane protein 266 of Macaca fascicularis (Crab-eating macaque).